Here is a 336-residue protein sequence, read N- to C-terminus: Probable deoxyhypusine synthase (336 aa).

The active-site Nucleophile is Lys308.

It belongs to the deoxyhypusine synthase family. It depends on NAD(+) as a cofactor.

It carries out the reaction [eIF5A protein]-L-lysine + spermidine = [eIF5A protein]-deoxyhypusine + propane-1,3-diamine. The protein operates within protein modification; eIF5A hypusination. In terms of biological role, catalyzes the NAD-dependent oxidative cleavage of spermidine and the subsequent transfer of the butylamine moiety of spermidine to the epsilon-amino group of a specific lysine residue of the eIF-5A precursor protein to form the intermediate deoxyhypusine residue. The protein is Probable deoxyhypusine synthase of Thermococcus gammatolerans (strain DSM 15229 / JCM 11827 / EJ3).